The sequence spans 479 residues: Ribulose bisphosphate carboxylase large chain (479 aa).

Positions 1 to 2 are excised as a propeptide; the sequence is MS. Asparagine 123 and threonine 173 together coordinate substrate. Lysine 175 (proton acceptor) is an active-site residue. Residue lysine 177 participates in substrate binding. Lysine 201, aspartate 203, and glutamate 204 together coordinate Mg(2+). An N6-carboxylysine modification is found at lysine 201. Position 208 is a phosphoserine (serine 208). The active-site Proton acceptor is histidine 294. Residues arginine 295 and histidine 327 each contribute to the substrate site. Residue threonine 330 is modified to Phosphothreonine. Residue serine 379 participates in substrate binding.

The protein belongs to the RuBisCO large chain family. Type I subfamily. As to quaternary structure, heterohexadecamer of 8 large chains and 8 small chains; disulfide-linked. The disulfide link is formed within the large subunit homodimers. Mg(2+) serves as cofactor. The disulfide bond which can form in the large chain dimeric partners within the hexadecamer appears to be associated with oxidative stress and protein turnover.

The protein resides in the plastid. It localises to the chloroplast. It carries out the reaction 2 (2R)-3-phosphoglycerate + 2 H(+) = D-ribulose 1,5-bisphosphate + CO2 + H2O. The enzyme catalyses D-ribulose 1,5-bisphosphate + O2 = 2-phosphoglycolate + (2R)-3-phosphoglycerate + 2 H(+). In terms of biological role, ruBisCO catalyzes two reactions: the carboxylation of D-ribulose 1,5-bisphosphate, the primary event in carbon dioxide fixation, as well as the oxidative fragmentation of the pentose substrate in the photorespiration process. Both reactions occur simultaneously and in competition at the same active site. The chain is Ribulose bisphosphate carboxylase large chain from Lobularia maritima (Sweet alyssum).